A 153-amino-acid polypeptide reads, in one-letter code: UPF0756 membrane protein lin1603 (153 aa).

4 consecutive transmembrane segments (helical) span residues 6–26, 54–74, 80–100, and 117–137; these read MLFLLLFLLLGLIAKNNSLII, WGVTIITVAILIPIATGQIGF, SFKSAAGWIGLGAGIAVSILA, and LVFGTILAVVLFRGIAAGPVI.

The protein belongs to the UPF0756 family.

The protein localises to the cell membrane. This is UPF0756 membrane protein lin1603 from Listeria innocua serovar 6a (strain ATCC BAA-680 / CLIP 11262).